We begin with the raw amino-acid sequence, 809 residues long: Quinate/shikimate dehydrogenase (quinone) (809 aa).

Transmembrane regions (helical) follow at residues 14–34 (VWCFILGLALLITGAFYVIGG), 41–61 (GGSWYFLIAGLMITTSAFFMF), 68–88 (VWLYALAFIGTVIWALIDAGF), 90–110 (FWPLHSRLMFPAGLFAAVMLT), and 127–147 (AYVIGGLTVLGMLGGLYGMFI).

Belongs to the bacterial PQQ dehydrogenase family. Requires pyrroloquinoline quinone as cofactor.

Its subcellular location is the cell membrane. The enzyme catalyses L-quinate + a quinone = 3-dehydroquinate + a quinol. The catalysed reaction is shikimate + a quinone = 3-dehydroshikimate + a quinol. It participates in aromatic compound metabolism; 3,4-dihydroxybenzoate biosynthesis; 3-dehydroquinate from D-quinate (PQQ route): step 1/1. In terms of biological role, can act either on quinate or on shikimate. This Acinetobacter baylyi (strain ATCC 33305 / BD413 / ADP1) protein is Quinate/shikimate dehydrogenase (quinone) (quiA).